We begin with the raw amino-acid sequence, 221 residues long: Germin-like protein subfamily 1 member 17 (221 aa).

Residues 1–21 (MKVSMSLILITLSALVTIAKA) form the signal peptide. The cysteines at positions 31 and 48 are disulfide-linked. Residues 76–213 (SNVTTVNVDQ…AFQLDVNVVK (138 aa)) enclose the Cupin type-1 domain. Asn-77 is a glycosylation site (N-linked (GlcNAc...) asparagine). His-110, His-112, Glu-117, and His-159 together coordinate Mn(2+).

It belongs to the germin family. Oligomer (believed to be a pentamer but probably hexamer).

It localises to the secreted. The protein resides in the extracellular space. It is found in the apoplast. Functionally, may play a role in plant defense. Probably has no oxalate oxidase activity even if the active site is conserved. The chain is Germin-like protein subfamily 1 member 17 from Arabidopsis thaliana (Mouse-ear cress).